The sequence spans 122 residues: MIQQQSLLNVADNSGARKLMCIRVVGGGNRRYAHIGDVIIAVVKDASPNMAVKKSDVVRAVVVRTKKGLRRDSGMSIRFDDNAAVIINQDGNPRGTRVFGPVARELRDKNFTKIVSLAPEVL.

This sequence belongs to the universal ribosomal protein uL14 family. In terms of assembly, part of the 50S ribosomal subunit. Forms a cluster with proteins L3 and L19. In the 70S ribosome, L14 and L19 interact and together make contacts with the 16S rRNA in bridges B5 and B8.

Its function is as follows. Binds to 23S rRNA. Forms part of two intersubunit bridges in the 70S ribosome. The sequence is that of Large ribosomal subunit protein uL14 from Trichodesmium erythraeum (strain IMS101).